Consider the following 130-residue polypeptide: Methylglyoxal synthase (130 aa).

The MGS-like domain occupies 1 to 130; that stretch reads MSKPRIALIA…DLARNMQDVC (130 aa). Substrate contacts are provided by residues H11, K15, 37–40, and 57–58; these read TGTT and SG. D63 acts as the Proton donor/acceptor in catalysis. Residue H90 coordinates substrate.

The protein belongs to the methylglyoxal synthase family.

It catalyses the reaction dihydroxyacetone phosphate = methylglyoxal + phosphate. In terms of biological role, catalyzes the formation of methylglyoxal from dihydroxyacetone phosphate. The polypeptide is Methylglyoxal synthase (Burkholderia orbicola (strain AU 1054)).